A 158-amino-acid chain; its full sequence is Ribosomal RNA large subunit methyltransferase H (158 aa).

Residues leucine 72, glycine 103, and 122-127 each bind S-adenosyl-L-methionine; that span reads LGNLTL.

This sequence belongs to the RNA methyltransferase RlmH family. Homodimer.

The protein resides in the cytoplasm. It catalyses the reaction pseudouridine(1915) in 23S rRNA + S-adenosyl-L-methionine = N(3)-methylpseudouridine(1915) in 23S rRNA + S-adenosyl-L-homocysteine + H(+). Functionally, specifically methylates the pseudouridine at position 1915 (m3Psi1915) in 23S rRNA. The protein is Ribosomal RNA large subunit methyltransferase H of Acidiphilium cryptum (strain JF-5).